Consider the following 146-residue polypeptide: Hemoglobin subunit beta-1 (146 aa).

Residues 2–146 (HWTAEEKSAI…VAHALAHRYH (145 aa)) form the Globin domain. Heme b is bound by residues His63 and His92.

It belongs to the globin family. Heterotetramer of two alpha chains and two beta chains. Red blood cells.

In terms of biological role, involved in oxygen transport from the lung to the various peripheral tissues. This is Hemoglobin subunit beta-1 from Drymarchon melanurus erebennus (Texas indigo snake).